The following is a 287-amino-acid chain: Acetyl-coenzyme A carboxylase carboxyl transferase subunit beta (287 aa).

The 252-residue stretch at 36–287 (MWVKCDRCGK…KVLYKILELH (252 aa)) folds into the CoA carboxyltransferase N-terminal domain. Zn(2+) is bound by residues cysteine 40, cysteine 43, cysteine 59, and cysteine 62. The segment at 40 to 62 (CDRCGKTLYKKDLDENLKVCKFC) adopts a C4-type zinc-finger fold.

It belongs to the AccD/PCCB family. In terms of assembly, acetyl-CoA carboxylase is a heterohexamer composed of biotin carboxyl carrier protein (AccB), biotin carboxylase (AccC) and two subunits each of ACCase subunit alpha (AccA) and ACCase subunit beta (AccD). Zn(2+) is required as a cofactor.

It localises to the cytoplasm. It carries out the reaction N(6)-carboxybiotinyl-L-lysyl-[protein] + acetyl-CoA = N(6)-biotinyl-L-lysyl-[protein] + malonyl-CoA. It participates in lipid metabolism; malonyl-CoA biosynthesis; malonyl-CoA from acetyl-CoA: step 1/1. Its function is as follows. Component of the acetyl coenzyme A carboxylase (ACC) complex. Biotin carboxylase (BC) catalyzes the carboxylation of biotin on its carrier protein (BCCP) and then the CO(2) group is transferred by the transcarboxylase to acetyl-CoA to form malonyl-CoA. The protein is Acetyl-coenzyme A carboxylase carboxyl transferase subunit beta of Clostridium novyi (strain NT).